The following is a 390-amino-acid chain: Argininosuccinate synthase (390 aa).

Residue alanine 6–threonine 14 participates in ATP binding. Residue tyrosine 84 participates in L-citrulline binding. Glycine 114 is a binding site for ATP. L-aspartate-binding residues include threonine 116, asparagine 120, and aspartate 121. Asparagine 120 serves as a coordination point for L-citrulline. Residues arginine 124, serine 171, serine 180, glutamate 253, and tyrosine 265 each contribute to the L-citrulline site.

The protein belongs to the argininosuccinate synthase family. Type 1 subfamily. As to quaternary structure, homotetramer.

It localises to the cytoplasm. The catalysed reaction is L-citrulline + L-aspartate + ATP = 2-(N(omega)-L-arginino)succinate + AMP + diphosphate + H(+). It participates in amino-acid biosynthesis; L-arginine biosynthesis; L-arginine from L-ornithine and carbamoyl phosphate: step 2/3. This is Argininosuccinate synthase from Sulfurisphaera tokodaii (strain DSM 16993 / JCM 10545 / NBRC 100140 / 7) (Sulfolobus tokodaii).